Consider the following 576-residue polypeptide: MLDNFNQPKGSTIGVLKDGRTIQEAFDSLPRLESFSGSTATDKLRAAITLGVSEVAIGPVEGNGGRPYEFGDVVIPYPLRIVGCGSQGINVTKGTVLKRSAGASFMFHFTGEGQAQRPMGGGLFNINLNGDTATALGDIIKVTQWSYFKANNCAFQNMAGWGIRLKDVMESNISGNLFRRLGGPSGGGILFDDVRSAVTDNVNNLHIEDNTFALMSGPWIGSTANSNPDLIWIVRNKFEFDGTPAAPNTVDSYVLDFQQLSRAFIQDNGFTHFTTERNRYVGVLRVGATAVGTIKFEDNLLFACESAGLIAGGIVVSRGNVNNQGSATTAIKQFTNTSSKLCKLERVINVQSNGNVSVGQQILPDGYINMAELPGNTRLPSEYDADGETTSVLRVPANTQVRQWSVPKMYKDGLTVTKVTVRAKGAAAGAILSLQSGSTVLSTKSIDAGVWKNYVFYVKANQLQETLQLRNTGTADVLADGMVFGKVDYIDWDFAIAPGTLAAGAKYTTPNQSYLDVAGMRVQAVSIPMFDGPTTGLQVWVEATSANGSFVVVMKNDTGSELVTTVTRCRVRAFVS.

The tract at residues 34-360 (SFSGSTATDK…QSNGNVSVGQ (327 aa)) is catalytic. Active-site residues include Glu-170, Asp-229, Glu-239, and Asp-241. Residues 380 to 487 (PSEYDADGET…LADGMVFGKV (108 aa)) are carbohydrate binding. The lectin-like stretch occupies residues 488-576 (DYIDWDFAIA…TRCRVRAFVS (89 aa)).

In the N-terminal section; belongs to the Przondovirus depolymerase 2 family. The protein in the C-terminal section; belongs to the K21-specific depolymerase family. As to quaternary structure, homotrimer. The 3 parallel chains are tightly packed together to form an elongated structure of approximately 7 x 12 nm. Interacts (via N-terminus) with depolymerase 1 (via N-terminus); this interaction probably gives rise to a branched tailspike.

The protein resides in the virion. Its function is as follows. Functions as a receptor binding protein (RBP) and probably mediates the attachment to the host capsular exopolysaccharides. Displays a depolymerase activity that specifically degrades the K21-type polysaccharides Klebsiella pneumoniae capsule, which allows the phage to reach the host cell membrane and bind the entry receptor. The protein is Depolymerase 2, capsule K21-specific of Klebsiella phage KP32 (Bacteriophage KP32).